Reading from the N-terminus, the 259-residue chain is Probable metal transport system ATP-binding protein CT_068 (259 aa).

The ABC transporter domain occupies 9 to 241; sequence WSVEDLCVNY…AIFQAYGCEL (233 aa). 41–48 provides a ligand contact to ATP; it reads GPNGAGKS.

This sequence belongs to the ABC transporter superfamily.

The protein localises to the cell inner membrane. Functionally, part of an ATP-driven transport system CT_067/CT_068/CT_069/CT_070 for a metal. Probably responsible for energy coupling to the transport system. The chain is Probable metal transport system ATP-binding protein CT_068 from Chlamydia trachomatis serovar D (strain ATCC VR-885 / DSM 19411 / UW-3/Cx).